The following is a 252-amino-acid chain: 5-oxoprolinase subunit A (252 aa).

It belongs to the LamB/PxpA family. Forms a complex composed of PxpA, PxpB and PxpC.

It carries out the reaction 5-oxo-L-proline + ATP + 2 H2O = L-glutamate + ADP + phosphate + H(+). Its function is as follows. Catalyzes the cleavage of 5-oxoproline to form L-glutamate coupled to the hydrolysis of ATP to ADP and inorganic phosphate. This Bordetella pertussis (strain Tohama I / ATCC BAA-589 / NCTC 13251) protein is 5-oxoprolinase subunit A.